The following is a 248-amino-acid chain: Tetraspanin-16 (248 aa).

Topologically, residues 1–7 (MSEIRTG) are cytoplasmic. Residues 8-28 (FLTMATIILICIGLTMTGTGL) traverse the membrane as a helical segment. Residues 29–44 (YYRKTVSKCIRETDGS) are Extracellular-facing. A helical membrane pass occupies residues 45–65 (FVVIGLLLLVIPQFALYAICC). Topologically, residues 66–69 (HSKR) are cytoplasmic. The chain crosses the membrane as a helical span at residues 70-90 (MFTIYIYAMIFVSIVLGGYSL). The Extracellular segment spans residues 91–208 (KCFIYNTTFG…MSILKAIVHQ (118 aa)). Residues Asn96 and Asn141 are each glycosylated (N-linked (GlcNAc...) asparagine). The chain crosses the membrane as a helical span at residues 209–229 (WKYLSMFSYPALFLVCLSLAI). Residues 230-248 (SRSIMDTFDEPDDYRGYYS) are Cytoplasmic-facing.

This sequence belongs to the tetraspanin (TM4SF) family.

Its subcellular location is the membrane. May be involved in the regulation of cell differentiation. The polypeptide is Tetraspanin-16 (TET16) (Arabidopsis thaliana (Mouse-ear cress)).